Here is a 346-residue protein sequence, read N- to C-terminus: Biotin synthase (346 aa).

The region spanning Gln-38–Thr-256 is the Radical SAM core domain. [4Fe-4S] cluster contacts are provided by Cys-53, Cys-57, and Cys-60. Cys-97, Cys-128, Cys-188, and Arg-260 together coordinate [2Fe-2S] cluster.

The protein belongs to the radical SAM superfamily. Biotin synthase family. As to quaternary structure, homodimer. Requires [4Fe-4S] cluster as cofactor. [2Fe-2S] cluster serves as cofactor.

It catalyses the reaction (4R,5S)-dethiobiotin + (sulfur carrier)-SH + 2 reduced [2Fe-2S]-[ferredoxin] + 2 S-adenosyl-L-methionine = (sulfur carrier)-H + biotin + 2 5'-deoxyadenosine + 2 L-methionine + 2 oxidized [2Fe-2S]-[ferredoxin]. Its pathway is cofactor biosynthesis; biotin biosynthesis; biotin from 7,8-diaminononanoate: step 2/2. In terms of biological role, catalyzes the conversion of dethiobiotin (DTB) to biotin by the insertion of a sulfur atom into dethiobiotin via a radical-based mechanism. This is Biotin synthase from Salmonella gallinarum (strain 287/91 / NCTC 13346).